We begin with the raw amino-acid sequence, 340 residues long: Protein FAM50A-A (340 aa).

2 disordered regions span residues 1-22 (MAQYKGAASEAGRAMQLMKKRE) and 123-178 (NLEE…EEEN). Over residues 124–146 (LEEDEECEDEEGEEEESDKEDPP) the composition is skewed to acidic residues. Over residues 169 to 178 (PDRDREEEEN) the composition is skewed to basic and acidic residues.

It localises to the nucleus. Its function is as follows. Probably involved in the regulation of pre-mRNA splicing. The sequence is that of Protein FAM50A-A (fam50a-a) from Xenopus laevis (African clawed frog).